We begin with the raw amino-acid sequence, 428 residues long: tRNA(Ile)-lysidine synthase (428 aa).

28 to 33 (SGGVDS) lines the ATP pocket.

The protein belongs to the tRNA(Ile)-lysidine synthase family.

It localises to the cytoplasm. The enzyme catalyses cytidine(34) in tRNA(Ile2) + L-lysine + ATP = lysidine(34) in tRNA(Ile2) + AMP + diphosphate + H(+). In terms of biological role, ligates lysine onto the cytidine present at position 34 of the AUA codon-specific tRNA(Ile) that contains the anticodon CAU, in an ATP-dependent manner. Cytidine is converted to lysidine, thus changing the amino acid specificity of the tRNA from methionine to isoleucine. This is tRNA(Ile)-lysidine synthase from Streptococcus pyogenes serotype M1.